A 248-amino-acid chain; its full sequence is PF03932 family protein CutC (248 aa).

This sequence belongs to the CutC family. In terms of assembly, homodimer.

The protein localises to the cytoplasm. The chain is PF03932 family protein CutC from Escherichia coli O127:H6 (strain E2348/69 / EPEC).